A 74-amino-acid polypeptide reads, in one-letter code: MAKNSKYQDKQVDAILNDMIAVLEKHQAPVDLSLVVLGNMVTNLLVSSVGTNQRIALANAFSEALLNSVNKQKS.

This sequence belongs to the UPF0352 family.

The chain is UPF0352 protein PM1884 from Pasteurella multocida (strain Pm70).